The primary structure comprises 522 residues: Light-independent protochlorophyllide reductase subunit B (522 aa).

Asp36 contributes to the [4Fe-4S] cluster binding site. Residue Asp290 is the Proton donor of the active site. 425 to 426 (GL) contacts substrate.

It belongs to the ChlB/BchB/BchZ family. In terms of assembly, protochlorophyllide reductase is composed of three subunits; ChlL, ChlN and ChlB. Forms a heterotetramer of two ChlB and two ChlN subunits. The cofactor is [4Fe-4S] cluster.

The catalysed reaction is chlorophyllide a + oxidized 2[4Fe-4S]-[ferredoxin] + 2 ADP + 2 phosphate = protochlorophyllide a + reduced 2[4Fe-4S]-[ferredoxin] + 2 ATP + 2 H2O. It participates in porphyrin-containing compound metabolism; chlorophyll biosynthesis (light-independent). Component of the dark-operative protochlorophyllide reductase (DPOR) that uses Mg-ATP and reduced ferredoxin to reduce ring D of protochlorophyllide (Pchlide) to form chlorophyllide a (Chlide). This reaction is light-independent. The NB-protein (ChlN-ChlB) is the catalytic component of the complex. This Synechococcus sp. (strain CC9311) protein is Light-independent protochlorophyllide reductase subunit B.